The primary structure comprises 366 residues: MATFAPHISKITKSSTKFNYGRIAKTFLGVAGSAAIATYFYNNGNPFNNNNNNNNNNGGSKNAAKALFGASAGANVKIAKVPEGKSASDYQKVYNDIATKISENLEFDENAGYYGQLLRLAWHTSGTYDKSDNSGGSYGGTMIFAPEEFDPENAGLQVGREFLMEFLVKYPWISRGDLWTLGGVAAVQESGGPKIEWRPGRVDDNTASKVPPNGRLPDASKDGKYVKDLFARMGFNERETVALLGAHVLGRCHKHNSGYDGPWGPSFNQFTNVFYTTLLGDWHVKKWDGKKQYEDDETGEFMMLPTDMALKEESYFLKYVKMYADDQDLFFKDFAKAFSKLISNGIKYPADSKPILFKTLDEQDEE.

The Proton acceptor role is filled by H123. The segment covering 195–206 (IEWRPGRVDDNT) has biased composition (basic and acidic residues). The disordered stretch occupies residues 195-218 (IEWRPGRVDDNTASKVPPNGRLPD). H247 lines the heme b pocket. W263 acts as the Tryptophan radical intermediate in catalysis.

This sequence belongs to the peroxidase family. Cytochrome c peroxidase subfamily. In terms of assembly, forms a one-to-one complex with cytochrome c. Heme b is required as a cofactor.

It localises to the mitochondrion matrix. The protein localises to the mitochondrion intermembrane space. The enzyme catalyses 2 Fe(II)-[cytochrome c] + H2O2 + 2 H(+) = 2 Fe(III)-[cytochrome c] + 2 H2O. Its function is as follows. Destroys radicals which are normally produced within the cells and which are toxic to biological systems. This is Cytochrome c peroxidase, mitochondrial (CCP1) from Candida albicans (strain SC5314 / ATCC MYA-2876) (Yeast).